A 275-amino-acid polypeptide reads, in one-letter code: 3-methyl-2-oxobutanoate hydroxymethyltransferase (275 aa).

Residues aspartate 49 and aspartate 88 each contribute to the Mg(2+) site. 3-methyl-2-oxobutanoate contacts are provided by residues 49–50, aspartate 88, and lysine 118; that span reads DS. Glutamate 120 is a binding site for Mg(2+). Residue glutamate 187 is the Proton acceptor of the active site.

Belongs to the PanB family. As to quaternary structure, homodecamer; pentamer of dimers. Mg(2+) is required as a cofactor.

The protein resides in the cytoplasm. It carries out the reaction 3-methyl-2-oxobutanoate + (6R)-5,10-methylene-5,6,7,8-tetrahydrofolate + H2O = 2-dehydropantoate + (6S)-5,6,7,8-tetrahydrofolate. It participates in cofactor biosynthesis; (R)-pantothenate biosynthesis; (R)-pantoate from 3-methyl-2-oxobutanoate: step 1/2. Its function is as follows. Catalyzes the reversible reaction in which hydroxymethyl group from 5,10-methylenetetrahydrofolate is transferred onto alpha-ketoisovalerate to form ketopantoate. The chain is 3-methyl-2-oxobutanoate hydroxymethyltransferase from Brucella suis (strain ATCC 23445 / NCTC 10510).